The following is a 172-amino-acid chain: 3-phenylpropionate/cinnamic acid dioxygenase subunit beta (172 aa).

This sequence belongs to the bacterial ring-hydroxylating dioxygenase beta subunit family. As to quaternary structure, this dioxygenase system consists of four proteins: the two subunits of the hydroxylase component (HcaE and HcaF), a ferredoxin (HcaC) and a ferredoxin reductase (HcaD).

It carries out the reaction 3-phenylpropanoate + NADH + O2 + H(+) = 3-(cis-5,6-dihydroxycyclohexa-1,3-dien-1-yl)propanoate + NAD(+). The catalysed reaction is (E)-cinnamate + NADH + O2 + H(+) = (2E)-3-(cis-5,6-dihydroxycyclohexa-1,3-dien-1-yl)prop-2-enoate + NAD(+). Its pathway is aromatic compound metabolism; 3-phenylpropanoate degradation. Functionally, part of the multicomponent 3-phenylpropionate dioxygenase. Converts 3-phenylpropionic acid (PP) and cinnamic acid (CI) into 3-phenylpropionate-dihydrodiol (PP-dihydrodiol) and cinnamic acid-dihydrodiol (CI-dihydrodiol), respectively. The protein is 3-phenylpropionate/cinnamic acid dioxygenase subunit beta of Shigella flexneri serotype 5b (strain 8401).